Reading from the N-terminus, the 88-residue chain is Putative transposase InsN for insertion sequence element IS911B (88 aa).

It belongs to the transposase 8 family.

Functionally, involved in the transposition of the insertion sequence IS911. The polypeptide is Putative transposase InsN for insertion sequence element IS911B (insN2) (Escherichia coli (strain K12)).